Consider the following 828-residue polypeptide: MKLSRRSFMKANAVAAAAAAAGLSVPGVARAVVGQQEAIKWDKAPCRFCGTGCGVLVGTQQGRVVACQGDPDAPVNRGLNCIKGYFLPKIMYGKDRLTQPLLRMKNGKYDKEGEFTPITWDQAFDVMEDKFKTALKEKGPESIGMFGSGQWTIWEGYAASKLFKAGFRSNNIDPNARHCMASAVVGFMRTFGMDEPMGCYDDIEQADAFVLWGSNMAEMHPILWSRITNRRLSNQNVTVAVLSTYQHRSFELADNGIIFTPQSDLVILNYIANYIIQNNAINQDFFSKHVNLRKGATDIGYGLRPTHPLEKAAKNPGSDASEPMSFEDYKAFVAEYTLEKTAEMTGVPKDQLEQLAQLYADPNKKVISYWTMGFNQHTRGVWANNLVYNLHLLTGKISQPGCGPFSLTGQPSACGTAREVGTFAHRLPADMVVTNEKHRDICEKKWNIPSGTIPAKIGLHAVAQDRALKDGKLNVYWTMCTNNMQAGPNINEERMPGWRDPRNFIIVSDPYPTVSALAADLILPTAMWVEKEGAYGNAERRTQFWRQQVQAPGEAKSDLWQLVQFSRRFKTEEVWPEELLAKKPELRGKTLYEVLYATPEVSKFPVSELAEDQLNDESRELGFYLQKGLFEEYAWFGRGHGHDLAPFDDYHKARGLRWPVVNGKETQWRYSEGNDPYVKAGEGYKFYGKPDGKAVIFALPFEPAAEAPDEEYDLWLSTGRVLEHWHTGSMTRRVPELHRAFPEAVLFIHPLDAKARDLRRGDKVKVVSRRGEVISIVETRGRNRPPQGLVYMPFFDAAQLVNKLTLDATDPLSKETDFKKCAVKLEKV.

The tat-type signal signal peptide spans 1–31 (MKLSRRSFMKANAVAAAAAAAGLSVPGVARA). The 4Fe-4S Mo/W bis-MGD-type domain maps to 39-95 (IKWDKAPCRFCGTGCGVLVGTQQGRVVACQGDPDAPVNRGLNCIKGYFLPKIMYGKD). [4Fe-4S] cluster is bound by residues cysteine 46, cysteine 49, cysteine 53, and cysteine 81. Mo-bis(molybdopterin guanine dinucleotide) is bound by residues lysine 83, glutamine 150, asparagine 175, cysteine 179, 212–219 (WGSNMAEM), 243–247 (STYQH), 262–264 (QSD), methionine 372, glutamine 376, asparagine 482, 508–509 (SD), lysine 531, aspartate 558, and 718–727 (TGRVLEHWHT). Phenylalanine 794 is a substrate binding site. The Mo-bis(molybdopterin guanine dinucleotide) site is built by asparagine 802 and lysine 819.

Belongs to the prokaryotic molybdopterin-containing oxidoreductase family. NasA/NapA/NarB subfamily. Component of the periplasmic nitrate reductase NapAB complex composed of NapA and NapB. The cofactor is [4Fe-4S] cluster. It depends on Mo-bis(molybdopterin guanine dinucleotide) as a cofactor. Predicted to be exported by the Tat system. The position of the signal peptide cleavage has not been experimentally proven.

It localises to the periplasm. The enzyme catalyses 2 Fe(II)-[cytochrome] + nitrate + 2 H(+) = 2 Fe(III)-[cytochrome] + nitrite + H2O. Catalytic subunit of the periplasmic nitrate reductase complex NapAB. Receives electrons from NapB and catalyzes the reduction of nitrate to nitrite. This Escherichia coli O1:K1 / APEC protein is Periplasmic nitrate reductase.